The sequence spans 458 residues: UDP-N-acetylmuramoylalanine--D-glutamate ligase (458 aa).

124-130 (GSDGKTT) is a binding site for ATP.

The protein belongs to the MurCDEF family.

The protein localises to the cytoplasm. The enzyme catalyses UDP-N-acetyl-alpha-D-muramoyl-L-alanine + D-glutamate + ATP = UDP-N-acetyl-alpha-D-muramoyl-L-alanyl-D-glutamate + ADP + phosphate + H(+). It participates in cell wall biogenesis; peptidoglycan biosynthesis. Its function is as follows. Cell wall formation. Catalyzes the addition of glutamate to the nucleotide precursor UDP-N-acetylmuramoyl-L-alanine (UMA). This Clostridium kluyveri (strain NBRC 12016) protein is UDP-N-acetylmuramoylalanine--D-glutamate ligase.